Reading from the N-terminus, the 1054-residue chain is Putative disease resistance RPP13-like protein 1 (1054 aa).

2 leucine-zipper regions span residues 9 to 20 (LAAFLQALFQTL) and 39 to 53 (LERL…TAVL). A coiled-coil region spans residues 117 to 147 (DFLDGNSEHLETRLEKVTIRLERLASQRNIL). Residues 152-462 (LTAMIPKQRL…AEGFLQQTRS (311 aa)) form the NB-ARC domain. Residue 203–210 (GIGGVGKT) participates in ATP binding. LRR repeat units follow at residues 579 to 600 (RLRV…FFKN), 603 to 624 (HARF…LCYM), 626 to 648 (NLQT…ISNL), 650 to 672 (NLRY…GRLK), and 676 to 697 (TLTT…GGLH). A disordered region spans residues 1018 to 1054 (PQYHHPQFHLPRSNVSGSPKSHGSHRSYDSRSSSRYD). Basic and acidic residues predominate over residues 1043-1054 (RSYDSRSSSRYD).

The protein belongs to the disease resistance NB-LRR family. RPP13 subfamily.

In terms of biological role, potential disease resistance protein. The chain is Putative disease resistance RPP13-like protein 1 (RPPL1) from Arabidopsis thaliana (Mouse-ear cress).